Consider the following 412-residue polypeptide: MSLIGRLNLGRRFCTAVPRRSEDIMSNPDCRPSDLCLRVSYLIRCVGDLDTAAKYARLAVFTSIKSESTTTICQSIIGGMLRDKRLKDAYDLYEFFFNQHNLRPNSHCWNYIIESGFQQGLVNDALHFHHRCINSGQVHDYPSDDSFRILTKGLVHSGRLDQAEAFLRGRTVNRTTYPDHVAYNNLIRGFLDLGNFKKANLVLGEFKRLFLIALSETKDDLHHSNYENRVAFLMATFMEYWFKQGKQVEAMECYNRCVLSNRLLVCAETGNALLKVLLKYGEKKNAWALYHELLDKNGTGKGCLDSDTIKIMVDECFDMGWFSEAMETYKKARPKNDYLSDKYIITRFCENRMLSEAESVFVDSLADDFGYIDVNTYKTMIDAYVKAGRIHDAIKTSNKMIDATLKEVSHLF.

The transit peptide at 1-18 (MSLIGRLNLGRRFCTAVP) directs the protein to the mitochondrion. PPR repeat units follow at residues 69–104 (TTTICQSIIGGMLRDKRLKDAYDLYEFFFNQHNLRP), 105–139 (NSHCWNYIIESGFQQGLVNDALHFHHRCINSGQVH), 143–178 (SDDSFRILTKGLVHSGRLDQAEAFLRGRTVNRTTYP), 179–213 (DHVAYNNLIRGFLDLGNFKKANLVLGEFKRLFLIA), 230–264 (VAFLMATFMEYWFKQGKQVEAMECYNRCVLSNRLL), 266–296 (CAETGNALLKVLLKYGEKKNAWALYHELLDK), 305–339 (DSDTIKIMVDECFDMGWFSEAMETYKKARPKNDYL), 344–371 (IITRFCENRMLSEAESVFVDSLADDFGY), and 373–407 (DVNTYKTMIDAYVKAGRIHDAIKTSNKMIDATLKE).

Belongs to the PPR family. P subfamily.

The protein resides in the mitochondrion. This Arabidopsis thaliana (Mouse-ear cress) protein is Pentatricopeptide repeat-containing protein At3g60980, mitochondrial.